The sequence spans 398 residues: Protein FAM53A (398 aa).

The tract at residues 85–253 (QWQPQSPRPG…TSTPALGGRR (169 aa)) is disordered. The segment covering 103 to 115 (VDPSESTGSSTAP) has biased composition (polar residues). The span at 123–132 (SLSEPEELVR) shows a compositional bias: basic and acidic residues. Serine 125 bears the Phosphoserine mark. Composition is skewed to low complexity over residues 176-193 (STGP…ASGG) and 234-250 (TPLP…PALG). Residues 268 to 276 (KRSRRKRRR) carry the Nuclear localization signal motif. Residues serine 301 and serine 304 each carry the phosphoserine modification. The tract at residues 336–398 (PGCSQRGLRT…ELDLEQIENN (63 aa)) is disordered. Residues 363–375 (GSRRSSGDPRDGD) are compositionally biased toward basic and acidic residues.

It belongs to the FAM53 family.

The protein localises to the nucleus. Functionally, may play an important role in neural development; the dorsomedial roof of the third ventricle. The protein is Protein FAM53A of Homo sapiens (Human).